Consider the following 314-residue polypeptide: Mevalonate kinase (314 aa).

An ATP-binding site is contributed by 103–109; that stretch reads GLGTSAA. Asp150 functions as the Proton acceptor in the catalytic mechanism.

Belongs to the GHMP kinase family. Mevalonate kinase subfamily. As to quaternary structure, homodimer. The cofactor is Mg(2+).

Its subcellular location is the cytoplasm. The catalysed reaction is (R)-mevalonate + ATP = (R)-5-phosphomevalonate + ADP + H(+). It functions in the pathway isoprenoid biosynthesis; isopentenyl diphosphate biosynthesis via mevalonate pathway; isopentenyl diphosphate from (R)-mevalonate: step 1/3. In terms of biological role, catalyzes the phosphorylation of (R)-mevalonate (MVA) to (R)-mevalonate 5-phosphate (MVAP). Functions in the mevalonate (MVA) pathway leading to isopentenyl diphosphate (IPP), a key precursor for the biosynthesis of isoprenoid compounds such as archaeal membrane lipids. This chain is Mevalonate kinase, found in Saccharolobus solfataricus (strain ATCC 35092 / DSM 1617 / JCM 11322 / P2) (Sulfolobus solfataricus).